The following is a 238-amino-acid chain: 2-C-methyl-D-erythritol 4-phosphate cytidylyltransferase (238 aa).

This sequence belongs to the IspD/TarI cytidylyltransferase family. IspD subfamily.

It carries out the reaction 2-C-methyl-D-erythritol 4-phosphate + CTP + H(+) = 4-CDP-2-C-methyl-D-erythritol + diphosphate. The protein operates within isoprenoid biosynthesis; isopentenyl diphosphate biosynthesis via DXP pathway; isopentenyl diphosphate from 1-deoxy-D-xylulose 5-phosphate: step 2/6. Its function is as follows. Catalyzes the formation of 4-diphosphocytidyl-2-C-methyl-D-erythritol from CTP and 2-C-methyl-D-erythritol 4-phosphate (MEP). This is 2-C-methyl-D-erythritol 4-phosphate cytidylyltransferase from Aliivibrio fischeri (strain MJ11) (Vibrio fischeri).